The sequence spans 139 residues: D-ribose pyranase (139 aa).

His-20 serves as the catalytic Proton donor. Residues Asp-28, His-106, and 128–130 (YAN) each bind substrate.

The protein belongs to the RbsD / FucU family. RbsD subfamily. Homodecamer.

It is found in the cytoplasm. It catalyses the reaction beta-D-ribopyranose = beta-D-ribofuranose. It participates in carbohydrate metabolism; D-ribose degradation; D-ribose 5-phosphate from beta-D-ribopyranose: step 1/2. Its function is as follows. Catalyzes the interconversion of beta-pyran and beta-furan forms of D-ribose. This is D-ribose pyranase from Escherichia coli O139:H28 (strain E24377A / ETEC).